The sequence spans 495 residues: Glutamate--tRNA ligase (495 aa).

The 'HIGH' region motif lies at 12-22 (PSPTGHLHIGN). The 'KMSKS' region motif lies at 259-263 (KLSKR). Lys262 provides a ligand contact to ATP.

This sequence belongs to the class-I aminoacyl-tRNA synthetase family. Glutamate--tRNA ligase type 1 subfamily. Monomer.

The protein resides in the cytoplasm. The catalysed reaction is tRNA(Glu) + L-glutamate + ATP = L-glutamyl-tRNA(Glu) + AMP + diphosphate. Its function is as follows. Catalyzes the attachment of glutamate to tRNA(Glu) in a two-step reaction: glutamate is first activated by ATP to form Glu-AMP and then transferred to the acceptor end of tRNA(Glu). This is Glutamate--tRNA ligase from Pediococcus pentosaceus (strain ATCC 25745 / CCUG 21536 / LMG 10740 / 183-1w).